Reading from the N-terminus, the 138-residue chain is MPTINQLVRKGRVSKVETSKSPALNKGYNSFKKEHTNVSSPQKRGVCTRVGTMTPKKPNSALRKYARVRLTNGIEVTAYIPGIGHNLQEHSVVLIRGGRVKDLPGVRYHIVRGALDTAGVENRAQGRSKYGTKRPKKK.

A disordered region spans residues 33–55; that stretch reads KEHTNVSSPQKRGVCTRVGTMTP. Asp-102 carries the 3-methylthioaspartic acid modification.

Belongs to the universal ribosomal protein uS12 family. Part of the 30S ribosomal subunit. Contacts proteins S8 and S17. May interact with IF1 in the 30S initiation complex.

With S4 and S5 plays an important role in translational accuracy. In terms of biological role, interacts with and stabilizes bases of the 16S rRNA that are involved in tRNA selection in the A site and with the mRNA backbone. Located at the interface of the 30S and 50S subunits, it traverses the body of the 30S subunit contacting proteins on the other side and probably holding the rRNA structure together. The combined cluster of proteins S8, S12 and S17 appears to hold together the shoulder and platform of the 30S subunit. The protein is Small ribosomal subunit protein uS12 of Bacillus licheniformis (strain ATCC 14580 / DSM 13 / JCM 2505 / CCUG 7422 / NBRC 12200 / NCIMB 9375 / NCTC 10341 / NRRL NRS-1264 / Gibson 46).